We begin with the raw amino-acid sequence, 190 residues long: Imidazoleglycerol-phosphate dehydratase (190 aa).

It belongs to the imidazoleglycerol-phosphate dehydratase family.

The protein resides in the cytoplasm. It catalyses the reaction D-erythro-1-(imidazol-4-yl)glycerol 3-phosphate = 3-(imidazol-4-yl)-2-oxopropyl phosphate + H2O. Its pathway is amino-acid biosynthesis; L-histidine biosynthesis; L-histidine from 5-phospho-alpha-D-ribose 1-diphosphate: step 6/9. The chain is Imidazoleglycerol-phosphate dehydratase from Sulfurovum sp. (strain NBC37-1).